The sequence spans 355 residues: Uroporphyrinogen decarboxylase (355 aa).

Residues 27-31, Asp78, Tyr155, Ser210, and His328 each bind substrate; that span reads RQAGR.

Belongs to the uroporphyrinogen decarboxylase family. Homodimer.

The protein localises to the cytoplasm. It carries out the reaction uroporphyrinogen III + 4 H(+) = coproporphyrinogen III + 4 CO2. The protein operates within porphyrin-containing compound metabolism; protoporphyrin-IX biosynthesis; coproporphyrinogen-III from 5-aminolevulinate: step 4/4. Functionally, catalyzes the decarboxylation of four acetate groups of uroporphyrinogen-III to yield coproporphyrinogen-III. The chain is Uroporphyrinogen decarboxylase from Ectopseudomonas mendocina (strain ymp) (Pseudomonas mendocina).